We begin with the raw amino-acid sequence, 82 residues long: ATP synthase subunit c (82 aa).

The next 2 helical transmembrane spans lie at Ile-5–Gly-25 and Leu-57–Ala-77.

The protein belongs to the ATPase C chain family. As to quaternary structure, F-type ATPases have 2 components, F(1) - the catalytic core - and F(0) - the membrane proton channel. F(1) has five subunits: alpha(3), beta(3), gamma(1), delta(1), epsilon(1). F(0) has four main subunits: a(1), b(1), b'(1) and c(10-14). The alpha and beta chains form an alternating ring which encloses part of the gamma chain. F(1) is attached to F(0) by a central stalk formed by the gamma and epsilon chains, while a peripheral stalk is formed by the delta, b and b' chains.

The protein resides in the cellular thylakoid membrane. Functionally, f(1)F(0) ATP synthase produces ATP from ADP in the presence of a proton or sodium gradient. F-type ATPases consist of two structural domains, F(1) containing the extramembraneous catalytic core and F(0) containing the membrane proton channel, linked together by a central stalk and a peripheral stalk. During catalysis, ATP synthesis in the catalytic domain of F(1) is coupled via a rotary mechanism of the central stalk subunits to proton translocation. Key component of the F(0) channel; it plays a direct role in translocation across the membrane. A homomeric c-ring of between 10-14 subunits forms the central stalk rotor element with the F(1) delta and epsilon subunits. The sequence is that of ATP synthase subunit c from Cyanothece sp. (strain PCC 7425 / ATCC 29141).